The primary structure comprises 570 residues: Rqc2 homolog RqcH (570 aa).

Residues 1-173 (MSFDGMFTYG…LPPAQDKISP (173 aa)) form an NFACT-N domain region. The interval 179–281 (DDILRHLSFQ…ELLDRFYFGK (103 aa)) is hhH domain. Coiled-coil stretches lie at residues 279–336 (FGKA…TANL) and 368–430 (TPSE…VEGK). Residues 282-434 (AERDRVKQQA…ELVEGKYLRP (153 aa)) form a coiled-coil-M (CCM) region. The tract at residues 446-570 (HNPVLETYES…ADTVIKLKKS (125 aa)) is NFACT-R.

It belongs to the NEMF family. Associates with isolated or stalled 50S ribosomal subunits. Binds to RqcP. Interacts with ribosomal protein uL11. Displaced from the 50S subunit by thiostrepton. In crystallized 50S subunits RqcH is variously associated with A/P-site tRNA, P-site tRNA and RqcP, an E-site tRNA or A- and P-site tRNAs and RqcP2(YlmH).

Functionally, key component of the ribosome quality control system (RQC), a ribosome-associated complex that mediates the extraction of incompletely synthesized nascent chains from stalled ribosomes and their subsequent degradation. RqcH recruits Ala-charged tRNA, and with RqcP directs the elongation of stalled nascent chains on 50S ribosomal subunits, leading to non-templated C-terminal alanine extensions (Ala tail). The Ala tail promotes nascent chain degradation. RqcH, RqcP and charged tRNA(Ala) are necessary and sufficient to add an Ala tail to a model stalled nascent peptide; does not add Val. Binds the P-site tRNA in 50S ribosomal subunit, unwinds the anticodon stem and interacts with the splayed anticodon. Selectively binds tRNA(Ala) isoacceptors, even in the absence of the 50S ribosomal subunit. Adds between 1 and at least 8 Ala residues to the nascent chain; detection of the Ala tail requires either deletion of clpP or its inhibition. Binds to 50S ribosomal subunits, at least 30% of which contain a P-site tRNA and thus are obstructed. The sequence is that of Rqc2 homolog RqcH from Bacillus subtilis (strain 168).